Reading from the N-terminus, the 152-residue chain is Mitochondrial holo-[acyl-carrier-protein] synthase (152 aa).

This sequence belongs to the P-Pant transferase superfamily. AcpS family.

Its subcellular location is the mitochondrion. It catalyses the reaction apo-[ACP] + CoA = holo-[ACP] + adenosine 3',5'-bisphosphate + H(+). Functionally, transfers the 4'-phosphopantetheine moiety from coenzyme A to a Ser of mitochondrial acyl-carrier-protein. In Candida glabrata (strain ATCC 2001 / BCRC 20586 / JCM 3761 / NBRC 0622 / NRRL Y-65 / CBS 138) (Yeast), this protein is Mitochondrial holo-[acyl-carrier-protein] synthase (PPT2).